Here is a 180-residue protein sequence, read N- to C-terminus: tRNA (cytidine(56)-2'-O)-methyltransferase (180 aa).

Residues leucine 84 and 112–116 contribute to the S-adenosyl-L-methionine site; that span reads GAEKV.

This sequence belongs to the aTrm56 family. As to quaternary structure, homodimer.

It localises to the cytoplasm. The enzyme catalyses cytidine(56) in tRNA + S-adenosyl-L-methionine = 2'-O-methylcytidine(56) in tRNA + S-adenosyl-L-homocysteine + H(+). Its function is as follows. Specifically catalyzes the AdoMet-dependent 2'-O-ribose methylation of cytidine at position 56 in tRNAs. The chain is tRNA (cytidine(56)-2'-O)-methyltransferase from Haloarcula marismortui (strain ATCC 43049 / DSM 3752 / JCM 8966 / VKM B-1809) (Halobacterium marismortui).